The primary structure comprises 341 residues: N-(sulfonatooxy)alkenimidothioic acid sulfate-lyase (epithionitrile-forming) (341 aa).

Residues 1 to 24 are disordered; that stretch reads MAPTLQGQWIKVGQKGGTGPGPRS. 4 Kelch repeats span residues 34–82, 87–133, 139–194, and 203–249; these read KLYS…VRMV, KIYI…FHSM, HVYV…VVQG, and ATSI…AHAV. Residues K46, R94, T129, F130, R157, G186, K211, and V244 each coordinate a (Z)-N-(sulfonatooxy)alkanimidothioate. Residue R94 is the Proton donor of the active site. R157 (proton donor) is an active-site residue. The Fe(2+) site is built by E260, D264, and H268. W303 contacts a (Z)-N-(sulfonatooxy)alkanimidothioate.

Homodimer. Interacts with WRKY53. Requires Fe(2+) as cofactor. In terms of tissue distribution, expressed in epidermal cells of all above-ground organs except the anthers, in cambial cells of leaf and stem vascular bundles, and in glucosinolates rich S-cells found in stems just below the inflorescence. Absent from roots.

It localises to the cytoplasm. The protein resides in the nucleus. The catalysed reaction is a (Z)-N-(sulfonatooxy)alkenimidothioate = an epithionitrile + sulfate. It carries out the reaction a (Z)-N-(sulfonatooxy)alkanimidothioate = a nitrile + sulfur + sulfate. It catalyses the reaction (Z)-(indol-3-yl)-N-(sulfonatooxy)methanimidothioate = (indol-3-yl)acetonitrile + sulfur + sulfate. With respect to regulation, not dependent on the presence of Fe(2+) although supplemental Fe(2+) increases nitriles formation. In terms of biological role, specifier protein that contributes to constitutive and herbivore-induced simple nitrile formation. Converts glucosinolates both to epithionitriles and to simple nitriles in the presence of myrosinase. Promotes the formation of epithionitriles after hydrolysis of alkenylglucosinolates containing a terminal double bond. Mediates indol-3-ylacetonitrile (IACN) production from indol-3-ylmethylglucosinolate (glucobrassicin). Triggers the production of 3,4-epithiobutylnitrile from 2-propenylisothiocyanate, product of 2-propenylglucosinolate (sinigrin) catalysis by myrosinase. Seems inactive toward benzylglucosinolate (glucotropaeolin). Acts as a negative regulator of senescence. The sequence is that of N-(sulfonatooxy)alkenimidothioic acid sulfate-lyase (epithionitrile-forming) from Arabidopsis thaliana (Mouse-ear cress).